Consider the following 355-residue polypeptide: Putative L-lysine 2,3-aminomutase (355 aa).

A Radical SAM core domain is found at V93 to P308. The [4Fe-4S] cluster site is built by C108, C112, and C115. N6-(pyridoxal phosphate)lysine is present on K320.

The protein belongs to the radical SAM superfamily. KamA family. Requires [4Fe-4S] cluster as cofactor. Pyridoxal 5'-phosphate is required as a cofactor.

This Treponema pallidum (strain Nichols) protein is Putative L-lysine 2,3-aminomutase.